We begin with the raw amino-acid sequence, 59 residues long: Cecropin-C type 2 (59 aa).

The N-terminal stretch at 1-23 (MNFAKVFVLVAMAVLLLVGQSEA) is a signal peptide.

Belongs to the cecropin family.

It is found in the secreted. Its function is as follows. Cecropins have lytic and antibacterial activity against several Gram-positive and Gram-negative bacteria. This chain is Cecropin-C type 2 (CECC2), found in Aedes albopictus (Asian tiger mosquito).